A 125-amino-acid chain; its full sequence is Phosphoribosyl-AMP cyclohydrolase (125 aa).

Position 74 (D74) interacts with Mg(2+). C75 serves as a coordination point for Zn(2+). Residues D76 and D78 each contribute to the Mg(2+) site. C92 and C99 together coordinate Zn(2+).

The protein belongs to the PRA-CH family. Homodimer. Mg(2+) serves as cofactor. Zn(2+) is required as a cofactor.

The protein localises to the cytoplasm. It carries out the reaction 1-(5-phospho-beta-D-ribosyl)-5'-AMP + H2O = 1-(5-phospho-beta-D-ribosyl)-5-[(5-phospho-beta-D-ribosylamino)methylideneamino]imidazole-4-carboxamide. It participates in amino-acid biosynthesis; L-histidine biosynthesis; L-histidine from 5-phospho-alpha-D-ribose 1-diphosphate: step 3/9. Catalyzes the hydrolysis of the adenine ring of phosphoribosyl-AMP. The polypeptide is Phosphoribosyl-AMP cyclohydrolase (Citrifermentans bemidjiense (strain ATCC BAA-1014 / DSM 16622 / JCM 12645 / Bem) (Geobacter bemidjiensis)).